A 125-amino-acid polypeptide reads, in one-letter code: Small ribosomal subunit protein eS8 (125 aa).

The protein belongs to the eukaryotic ribosomal protein eS8 family. As to quaternary structure, part of the 30S ribosomal subunit.

The polypeptide is Small ribosomal subunit protein eS8 (Methanosarcina acetivorans (strain ATCC 35395 / DSM 2834 / JCM 12185 / C2A)).